A 219-amino-acid polypeptide reads, in one-letter code: MGQKVNPIGLRLGIVKTWDSRWYAEKGKYAEFIREDFKLRKFLKKKLHHAGISKIEIERSGRRVRLRVFAARPGIVIGKKGSEIEQLKKELEKMVDNEVLIDIQEVRKPELDAQLVAENVAMQLERRVAFRRAMKRGISSAMRFGAQGVKIMAAGRLGGAEMARREWYREGRMPLHTLRADIDYGYTEANTTYGVIGVKVFIFKGEILKSDTEAANPTA.

One can recognise a KH type-2 domain in the interval 39-107; sequence LRKFLKKKLH…EVLIDIQEVR (69 aa).

It belongs to the universal ribosomal protein uS3 family. In terms of assembly, part of the 30S ribosomal subunit. Forms a tight complex with proteins S10 and S14.

Its function is as follows. Binds the lower part of the 30S subunit head. Binds mRNA in the 70S ribosome, positioning it for translation. This chain is Small ribosomal subunit protein uS3, found in Desulfatibacillum aliphaticivorans.